The sequence spans 463 residues: Probable diacyglycerol O-acyltransferase tgs1 (463 aa).

Histidine 137 acts as the Proton acceptor in catalysis.

The protein belongs to the long-chain O-acyltransferase family.

The catalysed reaction is an acyl-CoA + a 1,2-diacyl-sn-glycerol = a triacyl-sn-glycerol + CoA. Its pathway is glycerolipid metabolism; triacylglycerol biosynthesis. Catalyzes the terminal and only committed step in triacylglycerol synthesis by using diacylglycerol and fatty acyl CoA as substrates. Required for storage lipid synthesis. The polypeptide is Probable diacyglycerol O-acyltransferase tgs1 (tgs1) (Mycobacterium tuberculosis (strain CDC 1551 / Oshkosh)).